The following is a 417-amino-acid chain: MTPNSLLSAPSADGVWHHCHLLPDADPARAIRDGALVVEHGRIAWLGAAADLPEAWRGAPRHDANGAWITPGLVDCHTHLVYGGQRADEFAMRLAGAGYEEIARAGGGIVSTVRATRGADEDTLFAQAAARLQPLLAEGVTAIEIKSGYGLNLESERKQLRVARRLGEHFGISVYTTFLGAHALPPEYADRADDYIELVCNTMLPALADEGLVDAVDAFCESIGFSIAQTERVFDAAARHGLRVKLHAEQLSNLGGAALAARHRALSADHLEHLDEAGVAAMAEAGTVAVLLPGAYYFLRDTNLPPIALLRQYGVPMAISTDHNPGTSPVTSLLLMMNMACTLFRLTVPEALAGVTAHAARALGADDRHGRLAVGRVADFALWRIDSPAELAYWFGRNPVATVVRQGRVHAGAGAAA.

Positions 77 and 79 each coordinate Fe(3+). His77 and His79 together coordinate Zn(2+). 4-imidazolone-5-propanoate is bound by residues Arg86, Tyr149, and His182. Position 149 (Tyr149) interacts with N-formimidoyl-L-glutamate. His247 lines the Fe(3+) pocket. His247 contributes to the Zn(2+) binding site. Residue Gln250 coordinates 4-imidazolone-5-propanoate. Asp322 contributes to the Fe(3+) binding site. Residue Asp322 coordinates Zn(2+). 2 residues coordinate N-formimidoyl-L-glutamate: Asn324 and Gly326. Residue Thr327 coordinates 4-imidazolone-5-propanoate.

Belongs to the metallo-dependent hydrolases superfamily. HutI family. The cofactor is Zn(2+). Fe(3+) is required as a cofactor.

The protein resides in the cytoplasm. The enzyme catalyses 4-imidazolone-5-propanoate + H2O = N-formimidoyl-L-glutamate. The protein operates within amino-acid degradation; L-histidine degradation into L-glutamate; N-formimidoyl-L-glutamate from L-histidine: step 3/3. Its function is as follows. Catalyzes the hydrolytic cleavage of the carbon-nitrogen bond in imidazolone-5-propanoate to yield N-formimidoyl-L-glutamate. It is the third step in the universal histidine degradation pathway. This chain is Imidazolonepropionase, found in Cupriavidus taiwanensis (strain DSM 17343 / BCRC 17206 / CCUG 44338 / CIP 107171 / LMG 19424 / R1) (Ralstonia taiwanensis (strain LMG 19424)).